Reading from the N-terminus, the 1077-residue chain is ATP-dependent DNA helicase MPH1 (1077 aa).

Positions 99–266 constitute a Helicase ATP-binding domain; it reads IVHRALFENV…EVVDNLQISK (168 aa). ATP is bound at residue 112 to 119; sequence IPTGMGKT. The DEAH box signature appears at 214–217; that stretch reads DEAH. In terms of domain architecture, Helicase C-terminal spans 511–660; sequence KKVDRIRRLE…SLNYKVTDRI (150 aa). Disordered regions lie at residues 536–556 and 831–859; these read EKLA…ISGM and TLSS…PKRQ. Residues 831-841 are compositionally biased toward polar residues; that stretch reads TLSSDNKSTPD.

The protein belongs to the DEAD box helicase family. DEAH subfamily. FANCM sub-subfamily. As to quaternary structure, interacts with the MHF histone-fold complex to form the FANCM-MHF complex.

The protein localises to the nucleus. It carries out the reaction ATP + H2O = ADP + phosphate + H(+). ATP-dependent DNA helicase involved in DNA damage repair by homologous recombination and in genome maintenance. Capable of unwinding D-loops. Plays a role in limiting crossover recombinants during mitotic DNA double-strand break (DSB) repair. Component of a FANCM-MHF complex which promotes gene conversion at blocked replication forks, probably by reversal of the stalled fork. This Eremothecium gossypii (strain ATCC 10895 / CBS 109.51 / FGSC 9923 / NRRL Y-1056) (Yeast) protein is ATP-dependent DNA helicase MPH1.